The following is a 387-amino-acid chain: Chorismate synthase (387 aa).

Positions 39 and 45 each coordinate NADP(+). FMN-binding positions include 130 to 132, 251 to 252, G295, 310 to 314, and R336; these read RSS, NA, and KPIPT.

Belongs to the chorismate synthase family. Homotetramer. The cofactor is FMNH2.

It carries out the reaction 5-O-(1-carboxyvinyl)-3-phosphoshikimate = chorismate + phosphate. Its pathway is metabolic intermediate biosynthesis; chorismate biosynthesis; chorismate from D-erythrose 4-phosphate and phosphoenolpyruvate: step 7/7. Catalyzes the anti-1,4-elimination of the C-3 phosphate and the C-6 proR hydrogen from 5-enolpyruvylshikimate-3-phosphate (EPSP) to yield chorismate, which is the branch point compound that serves as the starting substrate for the three terminal pathways of aromatic amino acid biosynthesis. This reaction introduces a second double bond into the aromatic ring system. This is Chorismate synthase from Exiguobacterium sp. (strain ATCC BAA-1283 / AT1b).